A 158-amino-acid polypeptide reads, in one-letter code: Hypoxanthine DNA glycosylase (158 aa).

Asn39 is an active-site residue.

Belongs to the uracil-DNA glycosylase (UDG) superfamily. Type 6 (HDG) family.

In terms of biological role, excises hypoxanthine, a deamination product of adenine, from double-stranded DNA. Acts on double-stranded DNA containing G/I, T/I, A/I and C/I base pairs, but not on single-stranded inosine-containing DNA. Also has minor xanthine DNA glycosylase activity. Lacks any detectable uracil-DNA glycosylase activity. In Methanosarcina barkeri (strain Fusaro / DSM 804), this protein is Hypoxanthine DNA glycosylase.